The chain runs to 569 residues: Probable pyruvate decarboxylase Pdc101 (569 aa).

Substrate is bound by residues Asp-33 and His-120. Position 233 is a phosphoserine (Ser-233). The segment at 396 to 478 (DSWFNGLQMK…FLLNNRGYTI (83 aa)) is thiamine pyrophosphate binding. Asp-446, Asn-473, and Gly-475 together coordinate Mg(2+). A substrate-binding site is contributed by Glu-479. At Thr-521 the chain carries Phosphothreonine. Ser-522 is modified (phosphoserine).

It belongs to the TPP enzyme family. In terms of assembly, homotetramer. The cofactor is a metal cation. Requires thiamine diphosphate as cofactor.

The enzyme catalyses a 2-oxocarboxylate + H(+) = an aldehyde + CO2. The chain is Probable pyruvate decarboxylase Pdc101 (pdc101) from Schizosaccharomyces pombe (strain 972 / ATCC 24843) (Fission yeast).